The primary structure comprises 86 residues: MAKGQSLQDPFLNALRRERIPVSIYLVNGIKLQGQIESFDQFVILLKNTVNQMVYKHAISTVVPARPVSHHSGERGSDRPSEKSED.

Residues 9–68 form the Sm domain; it reads DPFLNALRRERIPVSIYLVNGIKLQGQIESFDQFVILLKNTVNQMVYKHAISTVVPARPV. Positions 65 to 86 are disordered; sequence ARPVSHHSGERGSDRPSEKSED. Residues 71–86 are compositionally biased toward basic and acidic residues; it reads HSGERGSDRPSEKSED.

Belongs to the Hfq family. Homohexamer.

RNA chaperone that binds small regulatory RNA (sRNAs) and mRNAs to facilitate mRNA translational regulation in response to envelope stress, environmental stress and changes in metabolite concentrations. Also binds with high specificity to tRNAs. This chain is RNA-binding protein Hfq, found in Vibrio vulnificus (strain YJ016).